Consider the following 96-residue polypeptide: Small ribosomal subunit protein bS16m (96 aa).

The protein belongs to the bacterial ribosomal protein bS16 family. In terms of assembly, component of the mitochondrial small ribosomal subunit (mt-SSU). Mature yeast 74S mitochondrial ribosomes consist of a small (37S) and a large (54S) subunit. The 37S small subunit contains a 15S ribosomal RNA (15S mt-rRNA) and at least 32 different proteins. The 54S large subunit contains a 21S rRNA (21S mt-rRNA) and at least 45 different proteins.

The protein resides in the mitochondrion. Its function is as follows. Component of the mitochondrial ribosome (mitoribosome), a dedicated translation machinery responsible for the synthesis of mitochondrial genome-encoded proteins, including at least some of the essential transmembrane subunits of the mitochondrial respiratory chain. The mitoribosomes are attached to the mitochondrial inner membrane and translation products are cotranslationally integrated into the membrane. This Schizosaccharomyces pombe (strain 972 / ATCC 24843) (Fission yeast) protein is Small ribosomal subunit protein bS16m (mrps16).